Reading from the N-terminus, the 135-residue chain is MAISTNKLFISGSRVSIMSLELIVPNEWNVIPRRTLETELLRIISAKQSVDQTTSGVIGFYNGIVAESRKLSGYLWFRKIGDHSKKPYVNWYQVMTIKPKESPATSSEDISSCSDCDSERLQSDDGCCSTCGEEE.

The interval 100–125 (KESPATSSEDISSCSDCDSERLQSDD) is disordered. Residues 106 to 115 (SSEDISSCSD) are compositionally biased toward low complexity.

This is an uncharacterized protein from Microplitis demolitor (Parasitoid wasp).